The sequence spans 384 residues: Alkanesulfonate monooxygenase (384 aa).

The protein belongs to the SsuD family.

It catalyses the reaction an alkanesulfonate + FMNH2 + O2 = an aldehyde + FMN + sulfite + H2O + 2 H(+). In terms of biological role, catalyzes the desulfonation of aliphatic sulfonates. This Burkholderia thailandensis (strain ATCC 700388 / DSM 13276 / CCUG 48851 / CIP 106301 / E264) protein is Alkanesulfonate monooxygenase.